Here is a 247-residue protein sequence, read N- to C-terminus: DNA polymerase sliding clamp (247 aa).

The protein belongs to the PCNA family. As to quaternary structure, homotrimer. The subunits circularize to form a toroid; DNA passes through its center. Replication factor C (RFC) is required to load the toroid on the DNA.

Its function is as follows. Sliding clamp subunit that acts as a moving platform for DNA processing. Responsible for tethering the catalytic subunit of DNA polymerase and other proteins to DNA during high-speed replication. In Natronomonas pharaonis (strain ATCC 35678 / DSM 2160 / CIP 103997 / JCM 8858 / NBRC 14720 / NCIMB 2260 / Gabara) (Halobacterium pharaonis), this protein is DNA polymerase sliding clamp.